A 664-amino-acid chain; its full sequence is Acetolactate synthase 2, chloroplastic (664 aa).

A compositionally biased stretch (low complexity) spans 1–34 (MAAAAAAPSPSFSKTLSSSSSKSSTLLPRSTFPF). Positions 1-51 (MAAAAAAPSPSFSKTLSSSSSKSSTLLPRSTFPFPHHPHKTTPPPLHLTPT) are disordered. The transit peptide at 1 to 91 (MAAAAAAPSP…VSRFAPDEPR (91 aa)) directs the protein to the chloroplast. Glutamate 138 provides a ligand contact to thiamine diphosphate. Cysteine 158 and cysteine 304 are joined by a disulfide. Residues arginine 240, 346-367 (HGTV…FGVR), and 389-408 (DIDS…ICAD) contribute to the FAD site. Residues 481-561 (QHQMWAAQYY…VKIMLLNNQH (81 aa)) are thiamine pyrophosphate binding. Mg(2+) is bound by residues aspartate 532 and asparagine 559.

The protein belongs to the TPP enzyme family. Mg(2+) serves as cofactor. It depends on thiamine diphosphate as a cofactor.

It is found in the plastid. The protein localises to the chloroplast. The catalysed reaction is 2 pyruvate + H(+) = (2S)-2-acetolactate + CO2. The protein operates within amino-acid biosynthesis; L-isoleucine biosynthesis; L-isoleucine from 2-oxobutanoate: step 1/4. It participates in amino-acid biosynthesis; L-valine biosynthesis; L-valine from pyruvate: step 1/4. The sequence is that of Acetolactate synthase 2, chloroplastic (ALS SURB) from Nicotiana tabacum (Common tobacco).